Reading from the N-terminus, the 608-residue chain is Chaperone protein HtpG (608 aa).

An a; substrate-binding region spans residues 1 to 332; it reads MQFQTEVNQL…VEDLPLNVSR (332 aa). The tract at residues 333–536 is b; it reads EILQENQILK…KNKLDFAMQQ (204 aa). The c stretch occupies residues 537–608; sequence LLKQMGQEQN…LTKIINKAFS (72 aa).

The protein belongs to the heat shock protein 90 family. As to quaternary structure, homodimer.

It localises to the cytoplasm. Molecular chaperone. Has ATPase activity. The protein is Chaperone protein HtpG of Campylobacter jejuni subsp. doylei (strain ATCC BAA-1458 / RM4099 / 269.97).